Reading from the N-terminus, the 130-residue chain is S-adenosylmethionine decarboxylase proenzyme (130 aa).

Serine 66 acts as the Schiff-base intermediate with substrate; via pyruvic acid in catalysis. Serine 66 carries the post-translational modification Pyruvic acid (Ser); by autocatalysis. Histidine 71 (proton acceptor; for processing activity) is an active-site residue. Cysteine 86 functions as the Proton donor; for catalytic activity in the catalytic mechanism.

The protein belongs to the prokaryotic AdoMetDC family. Type 1 subfamily. In terms of assembly, heterotetramer of two alpha and two beta chains arranged as a dimer of alpha/beta heterodimers. It depends on pyruvate as a cofactor. Post-translationally, is synthesized initially as an inactive proenzyme. Formation of the active enzyme involves a self-maturation process in which the active site pyruvoyl group is generated from an internal serine residue via an autocatalytic post-translational modification. Two non-identical subunits are generated from the proenzyme in this reaction, and the pyruvate is formed at the N-terminus of the alpha chain, which is derived from the carboxyl end of the proenzyme. The post-translation cleavage follows an unusual pathway, termed non-hydrolytic serinolysis, in which the side chain hydroxyl group of the serine supplies its oxygen atom to form the C-terminus of the beta chain, while the remainder of the serine residue undergoes an oxidative deamination to produce ammonia and the pyruvoyl group blocking the N-terminus of the alpha chain.

It carries out the reaction S-adenosyl-L-methionine + H(+) = S-adenosyl 3-(methylsulfanyl)propylamine + CO2. The protein operates within amine and polyamine biosynthesis; S-adenosylmethioninamine biosynthesis; S-adenosylmethioninamine from S-adenosyl-L-methionine: step 1/1. Functionally, catalyzes the decarboxylation of S-adenosylmethionine to S-adenosylmethioninamine (dcAdoMet), the propylamine donor required for the synthesis of the polyamines spermine and spermidine from the diamine putrescine. The sequence is that of S-adenosylmethionine decarboxylase proenzyme from Bacillus cytotoxicus (strain DSM 22905 / CIP 110041 / 391-98 / NVH 391-98).